The primary structure comprises 179 residues: Natural killer cells antigen CD94 (179 aa).

Over Met1–Trp10 the chain is Cytoplasmic. The chain crosses the membrane as a helical; Signal-anchor for type II membrane protein span at residues Leu11 to Leu31. At Lys32 to Ile179 the chain is on the extracellular side. Disulfide bonds link Cys58/Cys70 and Cys61/Cys72. Residues Tyr68–Lys175 form the C-type lectin domain. 2 N-linked (GlcNAc...) asparagine glycosylation sites follow: Asn83 and Asn132. Disulfide bonds link Cys89-Cys174 and Cys152-Cys166.

Can form disulfide-bonded heterodimer with NKG2 family members KLRC1 and KLRC2. KLRD1-KLRC1 heterodimer interacts with peptide-bound MHC-E-B2M heterotrimeric complex. KLRD1 plays a prominent role in directly interacting with MHC-E. KLRD1-KLRC1 interacts with much higher affinity with peptide-bound MHC-E-B2M than KLRD1-KLRC2. Interacts with the adapter protein TYROBP/DAP12; this interaction is required for cell surface expression and cell activation. In terms of tissue distribution, natural killer cells.

It localises to the cell membrane. In terms of biological role, immune receptor involved in self-nonself discrimination. In complex with KLRC1 or KLRC2 on cytotoxic and regulatory lymphocyte subsets, recognizes non-classical major histocompatibility (MHC) class Ib molecule MHC-E loaded with self-peptides derived from the signal sequence of classical MHC class Ia and non-classical MHC class Ib molecules. Enables cytotoxic cells to monitor the expression of MHC class I molecules in healthy cells and to tolerate self. Primarily functions as a ligand binding subunit as it lacks the capacity to signal. Functionally, KLRD1-KLRC1 acts as an immune inhibitory receptor. Key inhibitory receptor on natural killer (NK) cells that regulates their activation and effector functions. Dominantly counteracts T cell receptor signaling on a subset of memory/effector CD8-positive T cells as part of an antigen-driven response to avoid autoimmunity. On intraepithelial CD8-positive gamma-delta regulatory T cells triggers TGFB1 secretion, which in turn limits the cytotoxic programming of intraepithelial CD8-positive alpha-beta T cells, distinguishing harmless from pathogenic antigens. In MHC-E-rich tumor microenvironment, acts as an immune inhibitory checkpoint and may contribute to progressive loss of effector functions of NK cells and tumor-specific T cells, a state known as cell exhaustion. Upon MHC-E-peptide binding, transmits intracellular signals through KLRC1 immunoreceptor tyrosine-based inhibition motifs (ITIMs) by recruiting INPP5D/SHIP-1 and INPPL1/SHIP-2 tyrosine phosphatases to ITIMs, and ultimately opposing signals transmitted by activating receptors through dephosphorylation of proximal signaling molecules. KLRD1-KLRC2 acts as an immune activating receptor. On cytotoxic lymphocyte subsets recognizes MHC-E loaded with signal sequence-derived peptides from non-classical MHC class Ib MHC-G molecules, likely playing a role in the generation and effector functions of adaptive NK cells and in maternal-fetal tolerance during pregnancy. Regulates the effector functions of terminally differentiated cytotoxic lymphocyte subsets, and in particular may play a role in adaptive NK cell response to viral infection. Upon MHC-E-peptide binding, transmits intracellular signals via the adapter protein TYROBP/DAP12, triggering the phosphorylation of proximal signaling molecules and cell activation. This is Natural killer cells antigen CD94 (KLRD1) from Pongo pygmaeus (Bornean orangutan).